We begin with the raw amino-acid sequence, 245 residues long: 3-deoxy-manno-octulosonate cytidylyltransferase (245 aa).

This sequence belongs to the KdsB family.

The protein resides in the cytoplasm. The catalysed reaction is 3-deoxy-alpha-D-manno-oct-2-ulosonate + CTP = CMP-3-deoxy-beta-D-manno-octulosonate + diphosphate. The protein operates within nucleotide-sugar biosynthesis; CMP-3-deoxy-D-manno-octulosonate biosynthesis; CMP-3-deoxy-D-manno-octulosonate from 3-deoxy-D-manno-octulosonate and CTP: step 1/1. It participates in bacterial outer membrane biogenesis; lipopolysaccharide biosynthesis. In terms of biological role, activates KDO (a required 8-carbon sugar) for incorporation into bacterial lipopolysaccharide in Gram-negative bacteria. This Rhodopseudomonas palustris (strain ATCC BAA-98 / CGA009) protein is 3-deoxy-manno-octulosonate cytidylyltransferase.